The chain runs to 916 residues: Extracellular signal-regulated kinase 7 (916 aa).

Residues 25-319 form the Protein kinase domain; the sequence is FDVRKRMGKG…AKEAIRHPYV (295 aa). Residues 31-39 and Lys-54 each bind ATP; that span reads MGKGAYGIV. Residue Asp-149 is the Proton acceptor of the active site. Polar residues-rich tracts occupy residues 364–376 and 390–403; these read CSNR…TPSS and QART…TTSP. Disordered regions lie at residues 364-419, 452-477, 588-608, 711-742, 792-813, and 883-916; these read CSNR…TQSR, PPAA…KSVP, PSET…QMKR, KKLQ…SQNY, ELNP…PGRD, and CRHR…PESN. 3 stretches are compositionally biased toward basic and acidic residues: residues 590–608, 715–730, and 800–811; these read ETEH…QMKR, RSKE…RRAL, and GGRDSGSEHSPG. A compositionally biased stretch (basic residues) spans 883-892; that stretch reads CRHRHHKPNH. A compositionally biased stretch (basic and acidic residues) spans 894 to 903; that stretch reads APYDHMRPTE.

This sequence belongs to the protein kinase superfamily. Ser/Thr protein kinase family.

The enzyme catalyses L-seryl-[protein] + ATP = O-phospho-L-seryl-[protein] + ADP + H(+). It carries out the reaction L-threonyl-[protein] + ATP = O-phospho-L-threonyl-[protein] + ADP + H(+). Its function is as follows. Atypical MAPK protein that regulates protein secretion in a kinase activity-dependent manner. In response to starvation regulates protein secretion by mediating transitional endoplasmic reticulum site disassembly. Mediates inhibition of insulin-like peptide secretion upon disturbed ribosome biogenesis and acts as a downstream effector of TP53. The polypeptide is Extracellular signal-regulated kinase 7 (Drosophila melanogaster (Fruit fly)).